Reading from the N-terminus, the 151-residue chain is uncharacterized protein (151 aa).

2 BON domains span residues 2-68 and 78-146; these read DDAA…AVDK and IDSA…RLKH.

This is an uncharacterized protein from Anaplasma centrale.